Here is a 929-residue protein sequence, read N- to C-terminus: Isoleucine--tRNA ligase (929 aa).

Residues 58 to 68 (PYANGDIHIGH) carry the 'HIGH' region motif. Position 563 (Glu563) interacts with L-isoleucyl-5'-AMP. The 'KMSKS' region motif lies at 605–609 (KMSKS). Lys608 contacts ATP. Zn(2+)-binding residues include Cys892, Cys895, Cys912, and Cys915.

The protein belongs to the class-I aminoacyl-tRNA synthetase family. IleS type 1 subfamily. In terms of assembly, monomer. It depends on Zn(2+) as a cofactor.

Its subcellular location is the cytoplasm. It carries out the reaction tRNA(Ile) + L-isoleucine + ATP = L-isoleucyl-tRNA(Ile) + AMP + diphosphate. In terms of biological role, catalyzes the attachment of isoleucine to tRNA(Ile). As IleRS can inadvertently accommodate and process structurally similar amino acids such as valine, to avoid such errors it has two additional distinct tRNA(Ile)-dependent editing activities. One activity is designated as 'pretransfer' editing and involves the hydrolysis of activated Val-AMP. The other activity is designated 'posttransfer' editing and involves deacylation of mischarged Val-tRNA(Ile). This Neisseria meningitidis serogroup C (strain 053442) protein is Isoleucine--tRNA ligase.